The sequence spans 261 residues: Hydroxyethylthiazole kinase (261 aa).

Methionine 39 contacts substrate. The ATP site is built by arginine 115 and threonine 159. Residue glycine 186 coordinates substrate.

The protein belongs to the Thz kinase family. Mg(2+) serves as cofactor.

It carries out the reaction 5-(2-hydroxyethyl)-4-methylthiazole + ATP = 4-methyl-5-(2-phosphooxyethyl)-thiazole + ADP + H(+). The protein operates within cofactor biosynthesis; thiamine diphosphate biosynthesis; 4-methyl-5-(2-phosphoethyl)-thiazole from 5-(2-hydroxyethyl)-4-methylthiazole: step 1/1. Functionally, catalyzes the phosphorylation of the hydroxyl group of 4-methyl-5-beta-hydroxyethylthiazole (THZ). This is Hydroxyethylthiazole kinase from Macrococcus caseolyticus (strain JCSC5402) (Macrococcoides caseolyticum).